We begin with the raw amino-acid sequence, 122 residues long: Small ribosomal subunit protein uS13 (122 aa).

Residues 99–122 (RGQRTHTNARTRKGPAKAIAGKKK) form a disordered region.

It belongs to the universal ribosomal protein uS13 family. As to quaternary structure, part of the 30S ribosomal subunit. Forms a loose heterodimer with protein S19. Forms two bridges to the 50S subunit in the 70S ribosome.

In terms of biological role, located at the top of the head of the 30S subunit, it contacts several helices of the 16S rRNA. In the 70S ribosome it contacts the 23S rRNA (bridge B1a) and protein L5 of the 50S subunit (bridge B1b), connecting the 2 subunits; these bridges are implicated in subunit movement. Contacts the tRNAs in the A and P-sites. In Cereibacter sphaeroides (strain ATCC 17029 / ATH 2.4.9) (Rhodobacter sphaeroides), this protein is Small ribosomal subunit protein uS13.